We begin with the raw amino-acid sequence, 223 residues long: Neurotrophic factor BDNF precursor form (223 aa).

Positions 1–5 (SCMKA) are cleaved as a signal peptide. Positions 6-114 (APMKEVSIRG…AANMSMRVRR (109 aa)) are excised as a propeptide. N107 carries an N-linked (GlcNAc...) asparagine glycan. 2 cysteine pairs are disulfide-bonded: C127–C194 and C172–C223.

This sequence belongs to the NGF-beta family.

The protein resides in the secreted. Functionally, promotes the survival of neuronal populations that are all located either in the central nervous system or directly connected to it. In Eryx colubrinus colubrinus, this protein is Neurotrophic factor BDNF precursor form (BDNF).